We begin with the raw amino-acid sequence, 1419 residues long: Formin-1 (1419 aa).

The interval 1 to 622 (MEGTHCTLQL…TAEPQHQSPP (622 aa)) is microtubule-binding. Disordered regions lie at residues 138–194 (DWQG…MGKD), 262–331 (LGRE…KVVA), 343–641 (VVKT…TPKD), and 685–711 (SLTE…DTEE). The span at 151–163 (RSTHGNKKPRRSS) shows a compositional bias: basic residues. Residues 298–317 (SHQDPEKHPEAEKDEMEKPA) show a composition bias toward basic and acidic residues. Residues 394–411 (RSSQSPAGETASISSVSA) show a composition bias toward polar residues. A compositionally biased stretch (basic and acidic residues) spans 425 to 438 (IESEKLDEAPEGKR). The interval 456–842 (NKRRAGLPLG…LNISSLSQLS (387 aa)) is mediates interaction with alpha-catenin. The span at 504-517 (FNNSASQSSTHKQT) shows a compositional bias: polar residues. A compositionally biased stretch (pro residues) spans 520-529 (VPSPLSPRLP). Over residues 614–623 (AEPQHQSPPG) the composition is skewed to polar residues. Over residues 685 to 694 (SLTEQDDRTP) the composition is skewed to basic and acidic residues. Positions 720-774 (AEYQAAILHLKREHKEEIENLQAQFELRAFHIRGEHAMITARLEETIENLKHELE) form a coiled coil. Disordered regions lie at residues 859–978 (GMAS…AIEP) and 1390–1419 (SEKK…VTTN). Composition is skewed to pro residues over residues 868–882 (LPPP…PPLP) and 890–958 (PAPP…PPPG). An FH1 domain is found at 870–957 (PPPASIPPPP…PPGLAPPPPP (88 aa)). The region spanning 972–1388 (RKPAIEPSCP…KMAQESVSKL (417 aa)) is the FH2 domain.

The protein belongs to the formin homology family. Cappuccino subfamily. As to quaternary structure, interacts with alpha-catenin and may interact with tubulin. Post-translationally, phosphorylated on serine and possibly threonine residues.

It is found in the nucleus. The protein resides in the cytoplasm. The protein localises to the cell junction. Its subcellular location is the adherens junction. It localises to the cell membrane. Its function is as follows. Plays a role in the formation of adherens junction and the polymerization of linear actin cables. The polypeptide is Formin-1 (FMN1) (Homo sapiens (Human)).